The primary structure comprises 107 residues: uncharacterized protein (107 aa).

A compositionally biased stretch (polar residues) spans 80–98; it reads SIDNLKPTSHQNGTTNDTA. The tract at residues 80 to 107 is disordered; that stretch reads SIDNLKPTSHQNGTTNDTATMDHLEKNE.

This is an uncharacterized protein from Human spumaretrovirus (SFVcpz(hu)).